Reading from the N-terminus, the 90-residue chain is Small ribosomal subunit protein uS15c (90 aa).

This sequence belongs to the universal ribosomal protein uS15 family. As to quaternary structure, part of the 30S ribosomal subunit.

The protein localises to the plastid. It localises to the chloroplast. This Liriodendron tulipifera (Tuliptree) protein is Small ribosomal subunit protein uS15c (rps15).